The sequence spans 394 residues: MNKKSIRDVDLKGKRVFCRVDFNVPMKEGKITDETRIRAALPTIQYLVEQGAKVILASHLGRPKGQVVEELRLTPVAARLGELLGKDVKKADEAFGPVAQEMVAAMNEGDVLVLENVRFYAGEEKNDAELAKEFAALADIFVNDAFGAAHRAHASTAGIADYLPAVSGLLMEKELDVLGKALSNPDRPFTAIIGGAKVKDKIGVIRHLLDKVDNLIIGGGLAYTFVKALGHEIGLSLCEDDKIELAKEFMQLAKEKGVNFYMPVDVVITEEFSETATTKIVGIDSIPSNWEGVDIGPKTREIYADVIKNSKLVVWNGPMGVFEMTPFSQGTKAVGQALADAEGTYSVIGGGDSAAAVEKFGMADKMSHISTGGGASLEFMEGKELPGVVCLNDK.

Substrate is bound by residues 21 to 23 (DFN), arginine 36, 59 to 62 (HLGR), arginine 118, and arginine 151. At serine 183 the chain carries Phosphoserine. ATP contacts are provided by lysine 201 and glycine 292. Threonine 299 carries the phosphothreonine modification. ATP-binding positions include glutamate 323 and 350–353 (GGDS).

Belongs to the phosphoglycerate kinase family. In terms of assembly, monomer.

It localises to the cytoplasm. It carries out the reaction (2R)-3-phosphoglycerate + ATP = (2R)-3-phospho-glyceroyl phosphate + ADP. It participates in carbohydrate degradation; glycolysis; pyruvate from D-glyceraldehyde 3-phosphate: step 2/5. In Bacillus cereus (strain Q1), this protein is Phosphoglycerate kinase.